Reading from the N-terminus, the 152-residue chain is 6,7-dimethyl-8-ribityllumazine synthase (152 aa).

5-amino-6-(D-ribitylamino)uracil contacts are provided by residues phenylalanine 24, 56-58 (SFE), and 80-82 (VVV). 85 to 86 (ET) contacts (2S)-2-hydroxy-3-oxobutyl phosphate. The active-site Proton donor is the histidine 88. Position 113 (phenylalanine 113) interacts with 5-amino-6-(D-ribitylamino)uracil. Arginine 127 provides a ligand contact to (2S)-2-hydroxy-3-oxobutyl phosphate.

It belongs to the DMRL synthase family.

It carries out the reaction (2S)-2-hydroxy-3-oxobutyl phosphate + 5-amino-6-(D-ribitylamino)uracil = 6,7-dimethyl-8-(1-D-ribityl)lumazine + phosphate + 2 H2O + H(+). Its pathway is cofactor biosynthesis; riboflavin biosynthesis; riboflavin from 2-hydroxy-3-oxobutyl phosphate and 5-amino-6-(D-ribitylamino)uracil: step 1/2. Its function is as follows. Catalyzes the formation of 6,7-dimethyl-8-ribityllumazine by condensation of 5-amino-6-(D-ribitylamino)uracil with 3,4-dihydroxy-2-butanone 4-phosphate. This is the penultimate step in the biosynthesis of riboflavin. The polypeptide is 6,7-dimethyl-8-ribityllumazine synthase (Thermococcus onnurineus (strain NA1)).